Here is an 848-residue protein sequence, read N- to C-terminus: Neuroligin-3 (848 aa).

Positions 1–37 are cleaved as a signal peptide; that stretch reads MWLQLGLPSLSLSPTPTVGRSLCLILWFLSLVLRAST. Residues 38 to 709 lie on the Extracellular side of the membrane; that stretch reads QAPAPTVNTH…NPRDYSTELS (672 aa). An N-linked (GlcNAc...) asparagine glycan is attached at Asn98. Cys106 and Cys141 are disulfide-bonded. Residues 169–195 form a disordered region; it reads CRKGGSGAKKQGEDLADNDGDEDEDIR. Residues 182 to 194 are compositionally biased toward acidic residues; the sequence is DLADNDGDEDEDI. 2 cysteine pairs are disulfide-bonded: Cys340–Cys351 and Cys510–Cys544. An N-linked (GlcNAc...) asparagine glycan is attached at Asn545. 2 stretches are compositionally biased toward polar residues: residues 645–656 and 677–689; these read TKVPPPDTTHSS and AYSN…SWNG. Residues 645-691 are disordered; it reads TKVPPPDTTHSSHITRRPNGKTWSTKRPAISPAYSNENAPGSWNGDQ. A helical membrane pass occupies residues 710 to 730; it reads VTIAVGASLLFLNVLAFAALY. Residues 731-848 are Cytoplasmic-facing; sequence YRKDKRRQEP…LPNSHSTTRV (118 aa). Ser745 is modified (phosphoserine). Residue Tyr792 is modified to Phosphotyrosine.

This sequence belongs to the type-B carboxylesterase/lipase family. Homodimer, and heterodimer with NLGN1 and NLGN2. Interacts with neurexins NRXN1, NRXN2 and NRXN3. Interaction with neurexins is mediated by heparan sulfate glycan modification on neurexin. Interacts (via its C-terminus) with DLG4/PSD-95 (via PDZ domain 3). The N-terminus is blocked. Detected in brain and on hippocampus neurons, especially at excitatory synapses. Detected in retina (at protein level). Expressed in brain, spinal cord and dorsal root ganglion.

It is found in the cell membrane. It localises to the synapse. Cell surface protein involved in cell-cell-interactions via its interactions with neurexin family members. Plays a role in synapse function and synaptic signal transmission, and probably mediates its effects by recruiting and clustering other synaptic proteins. May promote the initial formation of synapses, but is not essential for this. May also play a role in glia-glia or glia-neuron interactions in the developing peripheral nervous system. This chain is Neuroligin-3 (Nlgn3), found in Rattus norvegicus (Rat).